The following is a 265-amino-acid chain: Hemin import ATP-binding protein HmuV (265 aa).

The ABC transporter domain occupies 10 to 247 (LVARHLRFQT…ETLAHWYRAD (238 aa)). Position 42-49 (42-49 (GPNGAGKS)) interacts with ATP.

Belongs to the ABC transporter superfamily. Heme (hemin) importer (TC 3.A.1.14.5) family. In terms of assembly, the complex is composed of two ATP-binding proteins (HmuV), two transmembrane proteins (HmuU) and a solute-binding protein (HmuT).

It localises to the cell inner membrane. In terms of biological role, part of the ABC transporter complex HmuTUV involved in hemin import. Responsible for energy coupling to the transport system. This Pectobacterium atrosepticum (strain SCRI 1043 / ATCC BAA-672) (Erwinia carotovora subsp. atroseptica) protein is Hemin import ATP-binding protein HmuV.